The primary structure comprises 602 residues: Na(+)/dicarboxylate cotransporter 3 (602 aa).

Topologically, residues 1 to 16 (MAALAAAAKKVWSARR) are cytoplasmic. A helical transmembrane segment spans residues 17-37 (LLVLLFTPLALLPVVFALPPK). At 38–55 (EGRCLFVILLMAVYWCTE) the chain is on the extracellular side. Residues 56–76 (ALPLSVTALLPIVLFPFMGIL) traverse the membrane as a helical segment. The Cytoplasmic portion of the chain corresponds to 77–82 (PSNKVC). The helical transmembrane segment at 83 to 103 (PQYFLDTNFLFLSGLIMASAI) threads the bilayer. The Extracellular portion of the chain corresponds to 104 to 137 (EEWNLHRRIALKILMLVGVQPARLILGMMVTTSF). Residues 138 to 158 (LSMWLSNTASTAMMLPIANAI) traverse the membrane as a helical segment. At 159–229 (LKSLFGQKEV…SRKEDEYRRN (71 aa)) the chain is on the cytoplasmic side. A helical transmembrane segment spans residues 230–250 (IWKGFLISIPYSASIGGTATL). The Extracellular segment spans residues 251–278 (TGTAPNLILLGQLKSFFPQCDVVNFGSW). Residues 279 to 299 (FIFAFPLMLLFLLAGWLWISF) form a helical membrane-spanning segment. Residues 300-336 (LYGGLSFRGWRKNKSEIRTNAEDRARAVIREEYQNLG) are Cytoplasmic-facing. Residues 337–357 (PIKFAEQAVFILFCMFAILLF) form a helical membrane-spanning segment. Topologically, residues 358-372 (TRDPKFIPGWASLFN) are extracellular. A helical membrane pass occupies residues 373 to 393 (PGFLSDAVTGVAIVTILFFFP). The Cytoplasmic segment spans residues 394 to 422 (SQRPSLKWWFDFKAPNTETEPLLTWKKAQ). An intramembrane region (helical) is located at residues 423–443 (ETVPWNIILLLGGGFAMAKGC). Topologically, residues 444-461 (EESGLSVWIGGQLHPLEN) are cytoplasmic. A helical transmembrane segment spans residues 462-482 (VPPALAVLLITVVIAFFTEFA). At 483–505 (SNTATIIIFLPVLAELAIRLRVH) the chain is on the extracellular side. A helical transmembrane segment spans residues 506 to 526 (PLYLMIPGTVGCSFAFMLPVS). The Cytoplasmic portion of the chain corresponds to 527–546 (TPPNSIAFASGHLLVKDMVR). The helical transmembrane segment at 547–567 (TGLLMNLMGVLLLSLAMNTWA) threads the bilayer. Topologically, residues 568–602 (QTIFQLGTFPDWADMYSVNVTALPPTLANDTFRTL) are extracellular. N-linked (GlcNAc...) asparagine glycosylation is found at Asn586 and Asn596.

The protein belongs to the SLC13A/DASS transporter (TC 2.A.47) family. NADC subfamily. As to expression, expression is highest in kidney. Detected in placenta, brain, liver and pancreas.

It localises to the cell membrane. The catalysed reaction is succinate(out) + 3 Na(+)(out) = succinate(in) + 3 Na(+)(in). The enzyme catalyses 2-oxoglutarate(out) + 3 Na(+)(out) = 2-oxoglutarate(in) + 3 Na(+)(in). It catalyses the reaction N-acetyl-L-aspartate(out) + 3 Na(+)(out) = N-acetyl-L-aspartate(in) + 3 Na(+)(in). It carries out the reaction glutarate(out) + 3 Na(+)(out) = glutarate(in) + 3 Na(+)(in). The catalysed reaction is fumarate(out) + 3 Na(+)(out) = fumarate(in) + 3 Na(+)(in). The enzyme catalyses malate(out) + 3 Na(+)(out) = malate(in) + 3 Na(+)(in). It catalyses the reaction 2,2-dimethylsuccinate(out) + 3 Na(+)(out) = 2,2-dimethylsuccinate(in) + 3 Na(+)(in). It carries out the reaction 2,3-dimethylsuccinate(out) + 3 Na(+)(out) = 2,3-dimethylsuccinate(in) + 3 Na(+)(in). The catalysed reaction is itaconate(out) + 3 Na(+)(out) = itaconate(in) + 3 Na(+)(in). Its activity is regulated as follows. Li(+) decreases succinate transport in the presence of Na(+). Functionally, high-affinity sodium-dicarboxylate cotransporter that accepts a range of substrates with 4-6 carbon atoms, such as the citric acid cycle intermediates succinate and alpha-ketoglutarate (2-oxoglutarate), as well as other compounds including N-acetyl-L-aspartate. Transports the dicarboxylate into the cell with a probable stoichiometry of 3 Na(+) for 1 divalent dicarboxylate, rendering the process electrogenic. Can transport citrate in a Na(+)-dependent manner, recognizing the divalent form of citrate rather than the trivalent form which is normally found in blood. Imports itaconate in hepatocytes leading to activation of TFEB-dependent lysosomal biogenesis involved in antibacterial innate immune response. The polypeptide is Na(+)/dicarboxylate cotransporter 3 (SLC13A3) (Homo sapiens (Human)).